A 44-amino-acid chain; its full sequence is Cytochrome b559 subunit beta (44 aa).

The chain crosses the membrane as a helical span at residues 19–35 (WLAIHGLAIPTVFFLGA). Histidine 23 lines the heme pocket.

Belongs to the PsbE/PsbF family. Heterodimer of an alpha subunit and a beta subunit. PSII is composed of 1 copy each of membrane proteins PsbA, PsbB, PsbC, PsbD, PsbE, PsbF, PsbH, PsbI, PsbJ, PsbK, PsbL, PsbM, PsbT, PsbX, PsbY, PsbZ, Psb30/Ycf12, at least 3 peripheral proteins of the oxygen-evolving complex and a large number of cofactors. It forms dimeric complexes. Heme b serves as cofactor.

Its subcellular location is the plastid. The protein localises to the chloroplast thylakoid membrane. Its function is as follows. This b-type cytochrome is tightly associated with the reaction center of photosystem II (PSII). PSII is a light-driven water:plastoquinone oxidoreductase that uses light energy to abstract electrons from H(2)O, generating O(2) and a proton gradient subsequently used for ATP formation. It consists of a core antenna complex that captures photons, and an electron transfer chain that converts photonic excitation into a charge separation. In Porphyra purpurea (Red seaweed), this protein is Cytochrome b559 subunit beta.